We begin with the raw amino-acid sequence, 137 residues long: Small ribosomal subunit protein uS11 (137 aa).

The tract at residues 116-137 (EDVTPIPHDGTRPKGGRRGRRV) is disordered.

Belongs to the universal ribosomal protein uS11 family. As to quaternary structure, part of the 30S ribosomal subunit.

In terms of biological role, located on the platform of the 30S subunit. In Pyrococcus abyssi (strain GE5 / Orsay), this protein is Small ribosomal subunit protein uS11.